We begin with the raw amino-acid sequence, 157 residues long: Transcriptional repressor NrdR (157 aa).

The segment at 3–34 (CPFCGHMESQVKDSRPSEDGAAIRRRRLCPEC) is a zinc-finger region. In terms of domain architecture, ATP-cone spans 49-139 (LTIVKRSGRR…VYRDFRETSD (91 aa)).

The protein belongs to the NrdR family. The cofactor is Zn(2+).

Functionally, negatively regulates transcription of bacterial ribonucleotide reductase nrd genes and operons by binding to NrdR-boxes. The sequence is that of Transcriptional repressor NrdR from Caulobacter sp. (strain K31).